The following is a 2281-amino-acid chain: Protein Ycf2 (2281 aa).

Gly1635–Ser1642 is a binding site for ATP.

Belongs to the Ycf2 family.

Its subcellular location is the plastid. It localises to the chloroplast stroma. Probable ATPase of unknown function. Its presence in a non-photosynthetic plant (Epifagus virginiana) and experiments in tobacco indicate that it has an essential function which is probably not related to photosynthesis. In Coffea arabica (Arabian coffee), this protein is Protein Ycf2.